Here is a 45-residue protein sequence, read N- to C-terminus: Small polypeptide DEVIL 2 (45 aa).

Residues 14 to 45 (SQSRRLGKYLKEQKGRIYIIRRCVMMLLCSHD) are required for DVL/RTFL small polypeptide activity. A helical transmembrane segment spans residues 17 to 33 (RRLGKYLKEQKGRIYII).

It belongs to the DVL/RTFL small polypeptides family. In terms of tissue distribution, mostly expressed in stems and, to a lower extent, in roots and leaves.

Its subcellular location is the cell membrane. In terms of biological role, small polypeptide acting as a regulatory molecule which coordinates cellular responses required for differentiation, growth and development, including leaves shape, pedicule elongation, inflorescence organization and fruit maturation, probably by restricting polar cell proliferation in lateral organs and coordinating socket cell recruitment and differentiation at trichome sites. This chain is Small polypeptide DEVIL 2, found in Arabidopsis thaliana (Mouse-ear cress).